A 657-amino-acid chain; its full sequence is Glycogen debranching enzyme (657 aa).

Aspartate 336 acts as the Nucleophile in catalysis. Catalysis depends on glutamate 371, which acts as the Proton donor. The tract at residues 460 to 479 (ANGEENRDGTNNNYSNNHGK) is disordered.

This sequence belongs to the glycosyl hydrolase 13 family.

It carries out the reaction Hydrolysis of (1-&gt;6)-alpha-D-glucosidic linkages to branches with degrees of polymerization of three or four glucose residues in limit dextrin.. The protein operates within glycan degradation; glycogen degradation. Removes maltotriose and maltotetraose chains that are attached by 1,6-alpha-linkage to the limit dextrin main chain, generating a debranched limit dextrin. This is Glycogen debranching enzyme from Escherichia coli O9:H4 (strain HS).